We begin with the raw amino-acid sequence, 1238 residues long: MGDAKEAGAEGPPAGAAARGGLSLLSQGESEESSAQGSALFLGGNEVKSRAVVKYSSAPPRTAFARLEEKTDLKLPPANWLRESAKLGPAGTTILGNSKKSKPFSSFGMAYDFIDSVGNDVDVVSDSENIKKLLKIPYSKSHVSMAVHRIGRTLLLDELDIQELFMRSSQTGDWTWLKEFYQRLIDQKWQRKKKSKEHWYQKAILSKFLYYSINGDGAAQPVSSTAEQQESSSSDQTNDSEGASWPAPFEMPSSVSEDPSASSQGSEPLEPSYIVGHVASAPKEQNLITLFNDGEHSQGLKNDFVRNILWTFEDIHMLVGSNMPIFGGGRYPAVSLRLRDNNKPINVLTGIDYWLDNLICNVPELVMCFHVNGIVQKYEMIKTEEIPNLENSNFSTKVIKDIAQNILSFLKSNCTKEGHTYWLFKASGSDIVKLYDLTTLCEETEDKYQNPFTMPVAILLYKVACNMMMKKNQNKKHYGTIRTLLLNCLKLLDKSRHPQIIASANYMLSELFQLDEPKKEENSESPLNENSDESYSEEEEEMPDSDENGSYSTSSDPSDDSKAVAIIKSVGELSVPEKYKSIHQIRPSCAFPVCHDTEERCRLVLSYVLEGLKSVDSSIKKESDLPAADPSTPIPLKYEDESSRGGPEGLEKQMALFLDKMGSLQKGNYSSQSGMIPGSWQHKMKLQLILKSSKAYYVLSDAAMSLQKYGRALRYIKLALQSHDTYCCLCTNMLSEVLLFLSQYLTLCGDIQLMLAQNANNRAAHLEEFHYQTKEDQEILHSLHRESSCQGFAWATDLSTDLESQLSVSCKCYEAANEILQFSDLKSQNPEHYVQVLKRMGNIRNEIGVFYMNQAAALQSERLVSKSVSAAEQQLWKKSFSCFEKGIHNFESIEDATNAALLLCNTGRLMRICAQAHCGAGDELKREFSPEEGLYYNKAIDYYLKALRSLGTRDIHPAVWDSVNWELSTTYFTMATLQQDYAPLSRKAQEQIEKEVSEAMMKSLKYCDVDSVSARQPLCQYRAATIHHRLASMYHSCLRNQVGDEHLRKQHRVLADLHYSKAAKLFQLLKDAPCELLRVQLERVAFAEFQMTSQNSNVGKLKTLSGALDIMVRTEHAFQLIQKELIEEFGQPKSGDAAAAADASPSLNREEVMKLLSIFESRLSFLLLQSIKLLSSTKKKTSNNIEDDTILKTNKHIYSQLLRATANKTATLLERINVIVHLLGQLAAGSAASSNAVQ.

4 disordered regions span residues 1–38, 220–268, 517–561, and 620–647; these read MGDAKEAGAEGPPAGAAARGGLSLLSQGESEESSAQGS, QPVS…GSEP, PKKE…SDDS, and KKESDLPAADPSTPIPLKYEDESSRGGP. Composition is skewed to low complexity over residues 9-38, 223-241, and 253-263; these read AEGPPAGAAARGGLSLLSQGESEESSAQGS, SSTAEQQESSSSDQTNDSE, and SSVSEDPSASS. The segment covering 530-547 has biased composition (acidic residues); the sequence is NSDESYSEEEEEMPDSDE. TPR repeat units follow at residues 693–726 and 914–953; these read SKAYYVLSDAAMSLQKYGRALRYIKLALQSHDTY and AQAHCGAGDELKREFSPEEGLYYNKAIDYYLKALRSLGTR.

Its subcellular location is the nucleus. In terms of biological role, transcription factor involved in erythroid differentiation. Involved in transcriptional activation of the globin gene. This Homo sapiens (Human) protein is Erythroid differentiation-related factor 1 (EDRF1).